Consider the following 126-residue polypeptide: Holo-[acyl-carrier-protein] synthase (126 aa).

The Mg(2+) site is built by Asp-8 and Glu-57.

Belongs to the P-Pant transferase superfamily. AcpS family. Requires Mg(2+) as cofactor.

The protein localises to the cytoplasm. It carries out the reaction apo-[ACP] + CoA = holo-[ACP] + adenosine 3',5'-bisphosphate + H(+). In terms of biological role, transfers the 4'-phosphopantetheine moiety from coenzyme A to a Ser of acyl-carrier-protein. This is Holo-[acyl-carrier-protein] synthase from Vibrio cholerae serotype O1 (strain ATCC 39315 / El Tor Inaba N16961).